Consider the following 197-residue polypeptide: 3-isopropylmalate dehydratase small subunit (197 aa).

The protein belongs to the LeuD family. LeuD type 1 subfamily. As to quaternary structure, heterodimer of LeuC and LeuD.

The enzyme catalyses (2R,3S)-3-isopropylmalate = (2S)-2-isopropylmalate. It functions in the pathway amino-acid biosynthesis; L-leucine biosynthesis; L-leucine from 3-methyl-2-oxobutanoate: step 2/4. Catalyzes the isomerization between 2-isopropylmalate and 3-isopropylmalate, via the formation of 2-isopropylmaleate. The protein is 3-isopropylmalate dehydratase small subunit of Geobacillus kaustophilus (strain HTA426).